Reading from the N-terminus, the 178-residue chain is Endothelin-2 (178 aa).

Residues 1–24 form the signal peptide; it reads MVSVPTAWCSVALALLVALHEGKD. The propeptide occupies 25–46; sequence QAAATLEQPASSPRARAAHLRL. 2 disulfides stabilise this stretch: C49-C63 and C51-C59. A propeptide spanning residues 70 to 178 is cleaved from the precursor; that stretch reads VNTPGQTAPY…RTTHSRHRKR (109 aa). An endothelin-like region spans residues 96–111; that stretch reads CECSSARDPACATFCH. A disordered region spans residues 154–178; sequence KTHFAKRQQEATREPRTTHSRHRKR. The span at 160–170 shows a compositional bias: basic and acidic residues; the sequence is RQQEATREPRT.

The protein belongs to the endothelin/sarafotoxin family.

Its subcellular location is the secreted. Endothelins are endothelium-derived vasoconstrictor peptides. This chain is Endothelin-2 (EDN2), found in Oryctolagus cuniculus (Rabbit).